The primary structure comprises 37 residues: Potassium channel toxin alpha-KTx 2.19 (37 aa).

Disulfide bonds link cysteine 7/cysteine 28, cysteine 13/cysteine 33, and cysteine 17/cysteine 35.

As to expression, expressed by the venom gland.

The protein localises to the secreted. Inhibitor of voltage-gated potassium channels. This is Potassium channel toxin alpha-KTx 2.19 from Rhopalurus junceus (Caribbean blue scorpion).